Reading from the N-terminus, the 338-residue chain is Probable O-antigen biosynthesis glycosyltransferase WbiN (338 aa).

This sequence belongs to the glycosyltransferase group 1 family. Glycosyltransferase 4 subfamily.

The enzyme catalyses N-acetyl-alpha-D-galactosaminyl-di-trans,octa-cis-undecaprenyl diphosphate + UDP-N-acetyl-alpha-D-galactosamine = alpha-D-GalNAc-(1-&gt;3)-alpha-D-GalNAc-di-trans,octa-cis-undecaprenyl diphosphate + UDP + H(+). It participates in bacterial outer membrane biogenesis; LPS O-antigen biosynthesis. Functionally, involved in the assembly of the O-repeating unit during O-antigen biosynthesis. The polypeptide is Probable O-antigen biosynthesis glycosyltransferase WbiN (Escherichia coli).